Consider the following 496-residue polypeptide: Cruciferin BnC2 (496 aa).

The N-terminal stretch at 1–23 is a signal peptide; it reads MARLSSLLYFSITVLIFLHGSTA. 2 cysteine pairs are disulfide-bonded: C30-C63 and C106-C313. Cupin type-1 domains are found at residues 35 to 269 and 319 to 468; these read LNAL…RTAQ and DNLD…EEAR. T109 is subject to Phosphothreonine. The segment at 114–170 is disordered; that stretch reads SVFQPGSGSPFGEGQGQGQQGQGQGQGQGQGKGQQGQGKGQQGQSQGQQGQGQGFRD. Positions 122–154 are enriched in gly residues; sequence SPFGEGQGQGQQGQGQGQGQGQGKGQQGQGKGQ. Y336 carries the phosphotyrosine modification. A Phosphoserine modification is found at S338. Residue T432 is modified to Phosphothreonine.

This sequence belongs to the 11S seed storage protein (globulins) family. As to quaternary structure, hexamer; each subunit is composed of an acidic and a basic chain derived from a single precursor and linked by a disulfide bond.

Its function is as follows. This is a seed storage protein. This chain is Cruciferin BnC2 (BnC2), found in Brassica napus (Rape).